Consider the following 290-residue polypeptide: Membrane protein insertase YidC (290 aa).

The N-terminal stretch at 1–19 (MKKKTLLPLFLGIMVFLAG) is a signal peptide. A lipid anchor (N-palmitoyl cysteine) is attached at Cys-20. The S-diacylglycerol cysteine moiety is linked to residue Cys-20. 5 consecutive transmembrane segments (helical) span residues 56-76 (YGLA…PFML), 134-154 (MLGC…YFVL), 176-196 (PDIW…YVSS), 207-224 (GYMM…ISLS), and 229-251 (LGLY…NIYY). Residues 270 to 290 (HNGGSNKKGKNTQVVSKKKKK) are disordered.

The protein belongs to the OXA1/ALB3/YidC family. Type 2 subfamily.

The protein localises to the cell membrane. In terms of biological role, required for the insertion and/or proper folding and/or complex formation of integral membrane proteins into the membrane. Involved in integration of membrane proteins that insert both dependently and independently of the Sec translocase complex, as well as at least some lipoproteins. This chain is Membrane protein insertase YidC, found in Staphylococcus aureus (strain MRSA252).